The primary structure comprises 225 residues: PKHD-type hydroxylase Smlt1146 (225 aa).

Residues 78–177 enclose the Fe2OG dioxygenase domain; that stretch reads KYLPPRFNRY…RVASFFWVQS (100 aa). Residues histidine 96, aspartate 98, and histidine 158 each coordinate Fe cation. Arginine 168 provides a ligand contact to 2-oxoglutarate.

Fe(2+) serves as cofactor. Requires L-ascorbate as cofactor.

This chain is PKHD-type hydroxylase Smlt1146, found in Stenotrophomonas maltophilia (strain K279a).